Reading from the N-terminus, the 1001-residue chain is Ulvan lyase, long isoform (1001 aa).

The first 21 residues, 1-21, serve as a signal peptide directing secretion; the sequence is MNGLKMLLFSTTLLTAFTLHA. Residue 126–127 coordinates substrate; that stretch reads SH. His127 serves as the catalytic Proton donor/acceptor. The Ca(2+) site is built by Asp189, Asp199, and Lys201. Positions 280 and 297 each coordinate substrate. Ca(2+) contacts are provided by Asp300, Asp303, and Tyr305. Tyr361 lines the substrate pocket.

This sequence belongs to the polysaccharide lyase 24 family.

Its function is as follows. Ulvan lyase involved in ulvan degradation. Ulvan is the main polysaccharide component of the Ulvales (green seaweed) cell wall. It is composed of disaccharide building blocks comprising 3-sulfated rhamnose (Rha3S) linked to D-glucuronic acid (GlcA), L-iduronic acid (IduA), or D-xylose (Xyl). Ulvan lyase catalyzes preferentially the endolytic cleavage of the glycosidic bond between Rha3S and the uronic acid GlcA, but not IduA, producing oligosaccharides that have unsaturated 4-deoxy-L-threo-hex-4-enopyranosiduronic acid (deltaUA) at the non-reducing end. The most abundant end products in the degradation of the ulvan polysaccharide were deltaUA-Rha3S disaccharides and deltaUA-Rha3S-IduA-Rha3S and deltaUA-Rha3S-Xyl-Rha3S tetrasaccharides. In Pseudoalteromonas sp. (strain PLSV), this protein is Ulvan lyase, long isoform.